The primary structure comprises 205 residues: Ephrin-A1 (205 aa).

The first 18 residues, 1–18 (MEFFWASLLGLCCSLAAA), serve as a signal peptide directing secretion. The Ephrin RBD domain maps to 19–151 (NRHTVFWNSS…RLKVMIAGKI (133 aa)). N-linked (GlcNAc...) asparagine glycosylation occurs at N26. 2 disulfide bridges follow: C51–C92 and C80–C140. S182 carries GPI-anchor amidated serine lipidation. The propeptide at 183-205 (AAPRLFPLAWAVLLLPFLLLQIP) is removed in mature form.

Belongs to the ephrin family. Monomer. Homodimer. Forms heterodimers with EPHA2. Binds to the receptor tyrosine kinases EPHA2, EPHA3, EPHA4, EPHA5, EPHA6 and EPHA7. Also binds with low affinity to EPHA1. Undergoes proteolysis by a metalloprotease to give rise to a soluble monomeric form. In terms of processing, N-Glycosylation is required for binding to EPHA2 receptor and inducing its internalization.

It is found in the cell membrane. The protein localises to the secreted. Its function is as follows. Cell surface GPI-bound ligand for Eph receptors, a family of receptor tyrosine kinases which are crucial for migration, repulsion and adhesion during neuronal, vascular and epithelial development. Binds promiscuously Eph receptors residing on adjacent cells, leading to contact-dependent bidirectional signaling into neighboring cells. Plays an important role in angiogenesis and tumor neovascularization. The recruitment of VAV2, VAV3 and PI3-kinase p85 subunit by phosphorylated EPHA2 is critical for EFNA1-induced RAC1 GTPase activation and vascular endothelial cell migration and assembly. Exerts anti-oncogenic effects in tumor cells through activation and down-regulation of EPHA2. Activates EPHA2 by inducing tyrosine phosphorylation which leads to its internalization and degradation. Acts as a negative regulator in the tumorigenesis of gliomas by down-regulating EPHA2 and FAK. Can evoke collapse of embryonic neuronal growth cone and regulates dendritic spine morphogenesis. This is Ephrin-A1 (EFNA1) from Bos taurus (Bovine).